Here is a 145-residue protein sequence, read N- to C-terminus: D-aminoacyl-tRNA deacylase (145 aa).

Positions 137–138 (GP) match the Gly-cisPro motif, important for rejection of L-amino acids motif.

Belongs to the DTD family. Homodimer.

The protein resides in the cytoplasm. It catalyses the reaction glycyl-tRNA(Ala) + H2O = tRNA(Ala) + glycine + H(+). It carries out the reaction a D-aminoacyl-tRNA + H2O = a tRNA + a D-alpha-amino acid + H(+). Its function is as follows. An aminoacyl-tRNA editing enzyme that deacylates mischarged D-aminoacyl-tRNAs. Also deacylates mischarged glycyl-tRNA(Ala), protecting cells against glycine mischarging by AlaRS. Acts via tRNA-based rather than protein-based catalysis; rejects L-amino acids rather than detecting D-amino acids in the active site. By recycling D-aminoacyl-tRNA to D-amino acids and free tRNA molecules, this enzyme counteracts the toxicity associated with the formation of D-aminoacyl-tRNA entities in vivo and helps enforce protein L-homochirality. The chain is D-aminoacyl-tRNA deacylase from Pseudomonas entomophila (strain L48).